A 138-amino-acid polypeptide reads, in one-letter code: ATP synthase epsilon chain (138 aa).

It belongs to the ATPase epsilon chain family. As to quaternary structure, F-type ATPases have 2 components, CF(1) - the catalytic core - and CF(0) - the membrane proton channel. CF(1) has five subunits: alpha(3), beta(3), gamma(1), delta(1), epsilon(1). CF(0) has three main subunits: a, b and c.

The protein resides in the cellular thylakoid membrane. Functionally, produces ATP from ADP in the presence of a proton gradient across the membrane. The sequence is that of ATP synthase epsilon chain (atpC) from Synechococcus sp. (strain PCC 6716).